The primary structure comprises 407 residues: Putative glycosyltransferase YtcC (407 aa).

It belongs to the glycosyltransferase group 1 family. Glycosyltransferase 4 subfamily.

The sequence is that of Putative glycosyltransferase YtcC (ytcC) from Bacillus subtilis (strain 168).